Consider the following 1334-residue polypeptide: SCAR-like protein 2 (1334 aa).

Residues 197–207 (KTGNFQREKKS) show a composition bias toward basic and acidic residues. 10 disordered regions span residues 197-281 (KTGN…SSFS), 294-331 (DTKP…GTSA), 481-516 (PDSS…ADAP), 568-602 (PNQS…SSYT), 643-668 (DKPT…TVES), 791-832 (STSH…KNII), 931-956 (FEKK…YSEK), 1000-1026 (FQLL…GRSY), 1248-1268 (SGQQ…DTKN), and 1280-1304 (RSKT…TANS). Residues 241-256 (VQLTSRHFATPSTDGR) are compositionally biased toward polar residues. Positions 310-319 (SNNNLHKLSN) are enriched in low complexity. The span at 320–330 (TPLHTRLNGTS) shows a compositional bias: polar residues. The segment covering 574-595 (DSKEIPDSKAEDAPIDSPEKLE) has biased composition (basic and acidic residues). Residues 791-823 (STSHSSETNQSTVRTPDTVIGQTEGSTGCSTSF) show a composition bias toward polar residues. A compositionally biased stretch (low complexity) spans 945–956 (SSLFSSSHYSEK). The span at 1248–1260 (SGQQKLNGHEKSK) shows a compositional bias: basic and acidic residues. The WH2 domain occupies 1271 to 1289 (EREELLQQIRSKTFNLRRT). Residues 1289–1304 (TNASKTNTSSPTTANS) show a composition bias toward low complexity.

This sequence belongs to the SCAR/WAVE family.

The protein localises to the cytoplasm. Its subcellular location is the cytoskeleton. Functionally, involved in regulation of actin and microtubule organization. Part of a WAVE complex that activates the Arp2/3 complex. This chain is SCAR-like protein 2, found in Oryza sativa subsp. japonica (Rice).